The chain runs to 250 residues: UPF0758 protein RPB_0700 (250 aa).

The tract at residues 1 to 27 is disordered; it reads MVDPISNAAPPMPADSSERLDPPGFAE. The region spanning 128–250 is the MPN domain; sequence VLSSWSAVID…HASLKGLKLF (123 aa). Zn(2+)-binding residues include histidine 199, histidine 201, and aspartate 212. The JAMM motif signature appears at 199-212; that stretch reads HNHPSGDPTPSQAD.

This sequence belongs to the UPF0758 family.

The polypeptide is UPF0758 protein RPB_0700 (Rhodopseudomonas palustris (strain HaA2)).